Consider the following 339-residue polypeptide: GATA transcription factor 5 (339 aa).

Disordered regions lie at residues 68 to 88, 126 to 145, 163 to 206, and 221 to 242; these read MVRV…RSSD, EYSG…WLTG, PVPA…PSSP, and ERPP…SGEL. The span at 126 to 136 shows a compositional bias: polar residues; the sequence is EYSGPNLTGTP. Residues 167-174 carry the Nuclear localization signal motif; that stretch reads KARSKRNR. The segment covering 181–206 has biased composition (low complexity); the sequence is SLGSSSSSGPSSSGSTSSSSSGPSSP. The segment at 245–299 adopts a GATA-type zinc-finger fold; the sequence is LQPQRKCSHCGVQKTPQWRAGPMGAKTLCNACGVRYKSGRLLPEYRPACSPTFSS. A disordered region spans residues 314-339; the sequence is RKKEPTSDNETGLNQLVQSPQAVPSF. Residues 321 to 339 show a composition bias toward polar residues; it reads DNETGLNQLVQSPQAVPSF.

The protein belongs to the type IV zinc-finger family. Class A subfamily.

The protein localises to the nucleus. Its function is as follows. Transcriptional activator that specifically binds 5'-GATA-3' or 5'-GAT-3' motifs within gene promoters. May be involved in the regulation of some light-responsive genes. In Arabidopsis thaliana (Mouse-ear cress), this protein is GATA transcription factor 5 (GATA5).